Reading from the N-terminus, the 371-residue chain is Cytochrome b (371 aa).

4 helical membrane passes run 25-45 (FGSM…FLSM), 69-90 (WMMQ…YMHI), 105-125 (WLSG…GYVL), and 170-190 (FFAL…VHIM). Heme b-binding residues include histidine 75 and histidine 89. Heme b is bound by residues histidine 174 and histidine 188. Histidine 193 provides a ligand contact to a ubiquinone. 4 helical membrane-spanning segments follow: residues 218 to 238 (YKDL…VSFF), 280 to 300 (LGGA…PFTH), 312 to 332 (LMQF…WTAT), and 339 to 358 (FTTI…MSNP).

This sequence belongs to the cytochrome b family. In terms of assembly, the cytochrome bc1 complex contains 3 respiratory subunits (MT-CYB, CYC1 and UQCRFS1), 2 core proteins (UQCRC1 and UQCRC2) and probably 6 low-molecular weight proteins. It depends on heme b as a cofactor.

The protein resides in the mitochondrion inner membrane. In terms of biological role, component of the ubiquinol-cytochrome c reductase complex (complex III or cytochrome b-c1 complex) that is part of the mitochondrial respiratory chain. The b-c1 complex mediates electron transfer from ubiquinol to cytochrome c. Contributes to the generation of a proton gradient across the mitochondrial membrane that is then used for ATP synthesis. The sequence is that of Cytochrome b (MT-CYB) from Candoia carinata (Papuan tree boa).